The following is a 345-amino-acid chain: Pectin lyase (345 aa).

An N-terminal signal peptide occupies residues 1 to 24 (MKRFCLWFAVFSLLLVLLPGKAFG). Arg234 is a catalytic residue.

The protein belongs to the polysaccharide lyase 1 family.

It is found in the secreted. The catalysed reaction is Eliminative cleavage of (1-&gt;4)-alpha-D-galacturonan methyl ester to give oligosaccharides with 4-deoxy-6-O-methyl-alpha-D-galact-4-enuronosyl groups at their non-reducing ends.. With respect to regulation, inhibited by Hg(2+) and Mn(2+). Not affected by EDTA in vitro. In terms of biological role, catalyzes the depolymerization of pectins of methyl esterification degree from 13 to 75%, with an endo mode of action. Cannot degrade polygalacturonate. Also displays protopectinase activity, i.e. releases pectin from protopectin. In Bacillus subtilis, this protein is Pectin lyase (pelB).